The following is a 580-amino-acid chain: PTS system fructose-specific EIIB'BC component (580 aa).

PTS EIIB type-2 domains are found at residues 3–100 and 124–221; these read MKIA…QAAE and KKIV…NAFA. Active-site phosphocysteine intermediate; for EIIB activity residues include cysteine 11 and cysteine 132. Phosphocysteine; by EIIA occurs at positions 11 and 132. The region spanning 244-579 is the PTS EIIC type-2 domain; it reads VYKHLMTGVS…KKSAQAKAVA (336 aa). 9 consecutive transmembrane segments (helical) span residues 254-274, 292-312, 322-342, 367-387, 408-428, 448-468, 480-500, 507-527, and 537-557; these read HMLP…VFGI, GGSA…FSIA, IGGM…VAGF, ILII…YVVG, NAIL…GGPV, MAAI…ATFI, AGKA…IPFA, VIPA…LFGA, and FVLL…AIAV.

It localises to the cell inner membrane. The enzyme catalyses D-fructose(out) + N(pros)-phospho-L-histidyl-[protein] = D-fructose 1-phosphate(in) + L-histidyl-[protein]. Its function is as follows. The phosphoenolpyruvate-dependent sugar phosphotransferase system (sugar PTS), a major carbohydrate active transport system, catalyzes the phosphorylation of incoming sugar substrates concomitantly with their translocation across the cell membrane. The enzyme II FruAB PTS system is involved in fructose transport. The protein is PTS system fructose-specific EIIB'BC component of Vibrio cholerae serotype O1 (strain ATCC 39315 / El Tor Inaba N16961).